The primary structure comprises 108 residues: Replication restart protein PriB (108 aa).

An SSB domain is found at 11–108 (INRNQVIISG…VLHVRDTRII (98 aa)).

The protein belongs to the PriB family. In terms of assembly, homodimer. Interacts with PriA and DnaT. Component of the replication restart primosome. Primosome assembly occurs via a 'hand-off' mechanism. PriA binds to replication forks, subsequently PriB then DnaT bind; DnaT then displaces ssDNA to generate the helicase loading substrate.

Functionally, involved in the restart of stalled replication forks, which reloads the replicative helicase on sites other than the origin of replication; the PriA-PriB pathway is the major replication restart pathway. During primosome assembly it facilitates complex formation between PriA and DnaT on DNA; stabilizes PriA on DNA. Stimulates the DNA unwinding activity of PriA helicase. The polypeptide is Replication restart protein PriB (Nitrosomonas europaea (strain ATCC 19718 / CIP 103999 / KCTC 2705 / NBRC 14298)).